A 713-amino-acid chain; its full sequence is Denticleless protein homolog (713 aa).

WD repeat units follow at residues 47–89 (GAAV…VQRL), 96–135 (AHTN…LIGE), and 138–178 (GHQC…KDGF). The short motif at 168 to 171 (WDTR) is the DDB1-binding motif element. The short motif at 197–204 (PSKVKKRK) is the Nuclear localization signal element. WD repeat units lie at residues 215-254 (DSQQ…SAYR), 270-309 (TRKL…TEPV), 314-355 (GHQN…VPPV), and 359-399 (GHCQ…EDSA). Residues 244-247 (WDLR) carry the DDB1-binding motif motif. Disordered stretches follow at residues 474–544 (TPQR…EKRA), 604–623 (GFDQ…NGTV), and 635–700 (SDLR…TPGS). Composition is skewed to polar residues over residues 504 to 516 (TPKS…TKTP) and 612 to 623 (GPSTSFLINGTV). A compositionally biased stretch (basic and acidic residues) spans 635 to 644 (SDLRDKENSS). The segment covering 686-699 (NAPNSPVSVPTTPG) has biased composition (polar residues).

This sequence belongs to the WD repeat cdt2 family. Component of the DCX(DTL) E3 ubiquitin ligase complex, at least composed of cul4 (cul4a or cul4b), ddb1, dtl/cdt2 and rbx1.

It is found in the nucleus. Its subcellular location is the cytoplasm. It localises to the cytoskeleton. The protein localises to the microtubule organizing center. The protein resides in the centrosome. It is found in the chromosome. It participates in protein modification; protein ubiquitination. Substrate-specific adapter of a DCX (DDB1-CUL4-X-box) E3 ubiquitin-protein ligase complex required for cell cycle control, DNA damage response and translesion DNA synthesis. The DCX(DTL) complex, also named CRL4(CDT2) complex, mediates the polyubiquitination and subsequent degradation of CDT1, CDKN1A/p21(CIP1), KMT5A and SDE2. CDT1 degradation in response to DNA damage is necessary to ensure proper cell cycle regulation of DNA replication. CDKN1A/p21(CIP1) degradation during S phase or following UV irradiation is essential to control replication licensing. KMT5A degradation is also important for a proper regulation of mechanisms such as TGF-beta signaling, cell cycle progression, DNA repair and cell migration. Most substrates require their interaction with PCNA for their polyubiquitination: substrates interact with PCNA via their PIP-box, and those containing the 'K+4' motif in the PIP box, recruit the DCX(DTL) complex, leading to their degradation. In undamaged proliferating cells, the DCX(DTL) complex also promotes the 'Lys-164' monoubiquitination of PCNA, thereby being involved in PCNA-dependent translesion DNA synthesis. May play a role in the regulation of the circadian clock. The sequence is that of Denticleless protein homolog (dtl) from Xenopus tropicalis (Western clawed frog).